The chain runs to 1323 residues: uncharacterized protein (1323 aa).

The segment covering 1–11 (MRELQGDDSSR) has biased composition (basic and acidic residues). Disordered regions lie at residues 1-57 (MREL…SSYY) and 79-112 (IHESSTALSAQSNTAQDGDQLASSSTISKDHSET). The segment covering 12-21 (KSPPSDSVVK) has biased composition (low complexity). Position 24 is a phosphoserine (serine 24). Positions 27–40 (DYEHSLKSLQDERT) are enriched in basic and acidic residues. Polar residues-rich tracts occupy residues 42 to 57 (NYPNKQFNSENPSSYY) and 80 to 105 (HESSTALSAQSNTAQDGDQLASSSTI). WD repeat units lie at residues 271–314 (RHST…DRAI), 320–360 (GHTR…FPVN), 364–403 (DWHNGATQVKWNYKNPHILASSHGRLVRIWDDRYGSAPLH), 409–449 (ENIT…EEPE), 453–494 (TTDS…KEGP), and 502–551 (GHTD…LNSM). Residues 671 to 779 (EELSWIGQKY…SYLSGNLSVD (109 aa)) enclose the RWD domain. Residues 879–888 (SNSVADSDST) are compositionally biased toward polar residues. The tract at residues 879 to 904 (SNSVADSDSTNYDDENSLNRGGTSES) is disordered. Residues 1265 to 1309 (CTFCCLSIHGLCIVCGLCLHVMHEDCYKEWFSNGDSISQSCSSGC) form an RING-type; degenerate zinc finger.

The protein belongs to the WD repeat WDR59 family.

In terms of biological role, may be involved in telomere capping. This is an uncharacterized protein from Schizosaccharomyces pombe (strain 972 / ATCC 24843) (Fission yeast).